A 386-amino-acid polypeptide reads, in one-letter code: Cytochrome b (386 aa).

4 helical membrane passes run 32-52 (FGSL…TLAM), 76-98 (WLIR…LHMG), 113-133 (TWNI…LGYV), and 179-199 (FFSL…MHLI). Residues histidine 82 and histidine 96 each contribute to the heme b site. Positions 183 and 197 each coordinate heme b. Residue histidine 202 participates in a ubiquinone binding. Transmembrane regions (helical) follow at residues 226–246 (FLFK…IFVL), 290–310 (TLGV…PYLD), 322–342 (LSKI…ILGA), and 349–369 (FIIF…IITP).

Belongs to the cytochrome b family. As to quaternary structure, fungal cytochrome b-c1 complex contains 10 subunits; 3 respiratory subunits, 2 core proteins and 5 low-molecular weight proteins. Cytochrome b-c1 complex is a homodimer. It depends on heme b as a cofactor.

It is found in the mitochondrion inner membrane. Component of the ubiquinol-cytochrome c reductase complex (complex III or cytochrome b-c1 complex) that is part of the mitochondrial respiratory chain. The b-c1 complex mediates electron transfer from ubiquinol to cytochrome c. Contributes to the generation of a proton gradient across the mitochondrial membrane that is then used for ATP synthesis. The chain is Cytochrome b (COB) from Trichophyton rubrum (Athlete's foot fungus).